Reading from the N-terminus, the 181-residue chain is Succinate dehydrogenase [ubiquinone] cytochrome b small subunit, mitochondrial (181 aa).

A mitochondrion-targeting transit peptide spans 1 to 31 (MMLPRSMKFMTGRRIFHTATVRAFQSTAKKS). Residues 32 to 66 (LTIPFLPVLPQKPGGVRGTPNDAYVPPPENKLEGS) lie on the Mitochondrial matrix side of the membrane. Residues 67–88 (YHWYMEKIFALSVVPLATTAML) form a helical membrane-spanning segment. Topologically, residues 89 to 98 (TTGPLSTAAD) are mitochondrial intermembrane. Residues 99–118 (SFFSVMLLGYCYMEFNSCIT) traverse the membrane as a helical segment. Cysteine 109 lines the heme pocket. Residues 119–127 (DYISERVYG) are Mitochondrial matrix-facing. Tyrosine 120 contacts a ubiquinone. A helical transmembrane segment spans residues 128–148 (VWHKYAMYMLGLGSAVSLFGI). The Mitochondrial intermembrane segment spans residues 149–181 (YKLETENDGVVGLVKSLWDSSEKDNSQKIEAKK).

It belongs to the CybS family. As to quaternary structure, forms part of complex II containing four subunits: a flavoprotein (FP), an iron-sulfur protein (IP) and a cytochrome b composed of a large and a small subunit.

It is found in the mitochondrion inner membrane. Its pathway is carbohydrate metabolism; tricarboxylic acid cycle. In terms of biological role, membrane-anchoring subunit of succinate dehydrogenase (SDH) that is involved in system II of the mitochondrial electron transport chain and is responsible for transferring electrons from succinate to ubiquinone (coenzyme Q). SDH3 and SDH4 form the membrane dimer that anchors the catalytic dimer formed by SDH1 and SDH2 to the matrix surface of the mitochondrial inner membrane. Electrons originating from the catalytic dimer enter the membrane dimer for ubiquinone reduction. This is Succinate dehydrogenase [ubiquinone] cytochrome b small subunit, mitochondrial (SDH4) from Saccharomyces cerevisiae (strain ATCC 204508 / S288c) (Baker's yeast).